The chain runs to 270 residues: Diaminopimelate epimerase (270 aa).

Residues Asn15, Gln49, and Asn66 each coordinate substrate. The active-site Proton donor is Cys75. Residues 76–77, Asn155, Asn187, and 204–205 contribute to the substrate site; these read GN and ER. Cys213 functions as the Proton acceptor in the catalytic mechanism. Residue 214–215 coordinates substrate; it reads GS.

This sequence belongs to the diaminopimelate epimerase family. Homodimer.

The protein resides in the cytoplasm. The enzyme catalyses (2S,6S)-2,6-diaminopimelate = meso-2,6-diaminopimelate. It participates in amino-acid biosynthesis; L-lysine biosynthesis via DAP pathway; DL-2,6-diaminopimelate from LL-2,6-diaminopimelate: step 1/1. Catalyzes the stereoinversion of LL-2,6-diaminopimelate (L,L-DAP) to meso-diaminopimelate (meso-DAP), a precursor of L-lysine and an essential component of the bacterial peptidoglycan. This chain is Diaminopimelate epimerase, found in Rickettsia rickettsii (strain Iowa).